A 61-amino-acid polypeptide reads, in one-letter code: Large ribosomal subunit protein bL32 (61 aa).

Residues 1 to 18 (MAIVPKRKTSKQRKRKRQ) show a composition bias toward basic residues. The interval 1-20 (MAIVPKRKTSKQRKRKRQTH) is disordered.

Belongs to the bacterial ribosomal protein bL32 family.

The polypeptide is Large ribosomal subunit protein bL32 (rpmF) (Mycoplasmopsis pulmonis (strain UAB CTIP) (Mycoplasma pulmonis)).